A 224-amino-acid polypeptide reads, in one-letter code: Small ribosomal subunit protein uS3 (224 aa).

The KH type-2 domain maps to 38–106 (LREFVKEKLG…EVYLNVVEVR (69 aa)).

Belongs to the universal ribosomal protein uS3 family. As to quaternary structure, part of the 30S ribosomal subunit. Forms a tight complex with proteins S10 and S14.

Functionally, binds the lower part of the 30S subunit head. Binds mRNA in the 70S ribosome, positioning it for translation. The sequence is that of Small ribosomal subunit protein uS3 from Anaeromyxobacter dehalogenans (strain 2CP-C).